The chain runs to 293 residues: Nucleotide-binding protein DvMF_0424 (293 aa).

13 to 20 (GLSGAGKS) is an ATP binding site. 65 to 68 (DLRE) provides a ligand contact to GTP.

It belongs to the RapZ-like family.

Its function is as follows. Displays ATPase and GTPase activities. In Nitratidesulfovibrio vulgaris (strain DSM 19637 / Miyazaki F) (Desulfovibrio vulgaris), this protein is Nucleotide-binding protein DvMF_0424.